The sequence spans 21 residues: Protein YadW (21 aa).

In Escherichia coli (strain K12), this protein is Protein YadW.